The following is a 439-amino-acid chain: tRNA modification GTPase MnmE (439 aa).

Arginine 20, glutamate 78, and lysine 116 together coordinate (6S)-5-formyl-5,6,7,8-tetrahydrofolate. A TrmE-type G domain is found at 211 to 364 (GIYVAILGEP…LLSAIQKKVE (154 aa)). GTP contacts are provided by residues 221–226 (NSGKST), 240–246 (SEYAGTT), and 265–268 (DTAG). 2 residues coordinate Mg(2+): serine 225 and threonine 246. Lysine 439 is a binding site for (6S)-5-formyl-5,6,7,8-tetrahydrofolate.

This sequence belongs to the TRAFAC class TrmE-Era-EngA-EngB-Septin-like GTPase superfamily. TrmE GTPase family. As to quaternary structure, homodimer. Heterotetramer of two MnmE and two MnmG subunits. Requires K(+) as cofactor.

The protein resides in the cytoplasm. Its function is as follows. Exhibits a very high intrinsic GTPase hydrolysis rate. Involved in the addition of a carboxymethylaminomethyl (cmnm) group at the wobble position (U34) of certain tRNAs, forming tRNA-cmnm(5)s(2)U34. The chain is tRNA modification GTPase MnmE from Ehrlichia ruminantium (strain Welgevonden).